The primary structure comprises 172 residues: Myosin regulatory light polypeptide 9 (172 aa).

Over residues 1–16 (MSSKRAKAKTTKKRPQ) the composition is skewed to basic residues. Positions 1–20 (MSSKRAKAKTTKKRPQRATS) are disordered. An N-acetylserine modification is found at Ser2. A Phosphothreonine; by MLCK, CIT and ROCK2 modification is found at Thr19. Ser20 bears the Phosphoserine; by CDC42BP, CIT, MLCK, PAK1, ROCK1, ROCK2, DAPK1, DAPK2 and ZIPK/DAPK3 mark. EF-hand domains lie at 29–64 (SQIQ…LGKN), 98–133 (DPED…MGDR), and 134–169 (FTDE…GAKD). Ca(2+)-binding residues include Asp42, Asn44, Asp46, and Asp53.

As to quaternary structure, myosin is a hexamer of 2 heavy chains and 4 light chains: interacts with myosin heavy chain MYO19. Interacts with LUZP1; the interaction results in inhibition of phosphorylation of MYL9 by DAPK3. Phosphorylation increases the actin-activated myosin ATPase activity and thereby regulates the contractile activity. It is required to generate the driving force in the migration of the cells but not necessary for localization of myosin-2 at the leading edge. Phosphorylation is required for myotube formation. Phosphorylated by DAPK3; DAPK3-mediated phosphorylation is inhibited by LUZP1. Smooth muscle tissues and in some, but not all, nonmuscle cells.

The protein localises to the cytoplasm. It localises to the cytoskeleton. The protein resides in the cell cortex. Its function is as follows. Myosin regulatory subunit that plays an important role in regulation of both smooth muscle and nonmuscle cell contractile activity via its phosphorylation. Implicated in cytokinesis, receptor capping, and cell locomotion. In myoblasts, may regulate PIEZO1-dependent cortical actomyosin assembly involved in myotube formation. This chain is Myosin regulatory light polypeptide 9 (MYL9), found in Homo sapiens (Human).